Reading from the N-terminus, the 851-residue chain is Putative cell signaling protein (851 aa).

Composition is skewed to basic and acidic residues over residues 165–176 (KLNEQDGKKSDN), 196–223 (DQAR…EETK), and 767–781 (SEER…LSHD). 2 disordered regions span residues 165–223 (KLNE…EETK) and 714–781 (DDSE…LSHD).

In terms of processing, palmitoylated.

This Schizosaccharomyces pombe (strain 972 / ATCC 24843) (Fission yeast) protein is Putative cell signaling protein.